The sequence spans 633 residues: Chaperone protein HtpG (633 aa).

The interval 1-341 is a; substrate-binding; that stretch reads MTAPHETMSF…SADLPLNVSR (341 aa). The interval 342 to 562 is b; the sequence is ELLQESRDVK…EGDMSGYLQR (221 aa). The tract at residues 563 to 633 is c; it reads LLKQAGQKAP…YVQRVNKLLA (71 aa).

It belongs to the heat shock protein 90 family. In terms of assembly, homodimer.

The protein localises to the cytoplasm. Functionally, molecular chaperone. Has ATPase activity. In Cupriavidus taiwanensis (strain DSM 17343 / BCRC 17206 / CCUG 44338 / CIP 107171 / LMG 19424 / R1) (Ralstonia taiwanensis (strain LMG 19424)), this protein is Chaperone protein HtpG.